Reading from the N-terminus, the 288-residue chain is Small ribosomal subunit protein uS2 (288 aa).

A disordered region spans residues 267 to 288; it reads EEVEEVEEEFIPSEIEDEDEKF.

The protein belongs to the universal ribosomal protein uS2 family.

This chain is Small ribosomal subunit protein uS2, found in Petrotoga mobilis (strain DSM 10674 / SJ95).